Consider the following 380-residue polypeptide: Endo-polygalacturonase (380 aa).

The N-terminal stretch at Met-1–Ala-17 is a signal peptide. The propeptide occupies Val-18–Arg-42. Cys-46 and Cys-64 are joined by a disulfide. 6 PbH1 repeats span residues Ala-178–Ser-207, Ser-208–Ser-229, Gly-230–Ser-250, Val-259–Thr-280, Val-288–Gln-310, and Thr-322–Ala-343. The active-site Proton donor is the Asp-222. A disulfide bond links Cys-224 and Cys-240. His-244 is an active-site residue. Cys-350 and Cys-353 are joined by a disulfide. Asn-361 is a glycosylation site (N-linked (GlcNAc...) asparagine). Cysteines 371 and 380 form a disulfide.

This sequence belongs to the glycosyl hydrolase 28 family.

Its subcellular location is the secreted. It carries out the reaction (1,4-alpha-D-galacturonosyl)n+m + H2O = (1,4-alpha-D-galacturonosyl)n + (1,4-alpha-D-galacturonosyl)m.. This chain is Endo-polygalacturonase (PG1), found in Sclerotinia sclerotiorum (White mold).